The following is a 314-amino-acid chain: Lipoyl synthase (314 aa).

The disordered stretch occupies residues M1–P24. [4Fe-4S] cluster is bound by residues C53, C58, C64, C79, C83, C86, and S293. The region spanning W65–L282 is the Radical SAM core domain. Over residues H294–Q308 the composition is skewed to basic and acidic residues. A disordered region spans residues H294–K314.

The protein belongs to the radical SAM superfamily. Lipoyl synthase family. [4Fe-4S] cluster is required as a cofactor.

Its subcellular location is the cytoplasm. It carries out the reaction [[Fe-S] cluster scaffold protein carrying a second [4Fe-4S](2+) cluster] + N(6)-octanoyl-L-lysyl-[protein] + 2 oxidized [2Fe-2S]-[ferredoxin] + 2 S-adenosyl-L-methionine + 4 H(+) = [[Fe-S] cluster scaffold protein] + N(6)-[(R)-dihydrolipoyl]-L-lysyl-[protein] + 4 Fe(3+) + 2 hydrogen sulfide + 2 5'-deoxyadenosine + 2 L-methionine + 2 reduced [2Fe-2S]-[ferredoxin]. It participates in protein modification; protein lipoylation via endogenous pathway; protein N(6)-(lipoyl)lysine from octanoyl-[acyl-carrier-protein]: step 2/2. Catalyzes the radical-mediated insertion of two sulfur atoms into the C-6 and C-8 positions of the octanoyl moiety bound to the lipoyl domains of lipoate-dependent enzymes, thereby converting the octanoylated domains into lipoylated derivatives. The protein is Lipoyl synthase of Rhodospirillum rubrum (strain ATCC 11170 / ATH 1.1.1 / DSM 467 / LMG 4362 / NCIMB 8255 / S1).